A 385-amino-acid chain; its full sequence is GDSL esterase/lipase At5g08460 (385 aa).

Positions 1-35 (MHDSEIFKFKDMMMMSCTVQTLVLVPWFLVVFVLA) are cleaved as a signal peptide. The Nucleophile role is filled by Ser-56. N-linked (GlcNAc...) asparagine glycosylation is found at Asn-218 and Asn-285. Catalysis depends on residues Asp-350 and His-353. Residues Asn-368 and Asn-378 are each glycosylated (N-linked (GlcNAc...) asparagine).

This sequence belongs to the 'GDSL' lipolytic enzyme family.

The protein resides in the secreted. In Arabidopsis thaliana (Mouse-ear cress), this protein is GDSL esterase/lipase At5g08460.